Consider the following 406-residue polypeptide: Argininosuccinate synthase (406 aa).

Residues 12–20 and A39 contribute to the ATP site; that span reads AYSGGLDTS. The L-citrulline site is built by Y90 and S95. G120 contributes to the ATP binding site. Residues T122, N126, and D127 each coordinate L-aspartate. N126 contributes to the L-citrulline binding site. 5 residues coordinate L-citrulline: R130, S179, S188, E264, and Y276.

This sequence belongs to the argininosuccinate synthase family. Type 1 subfamily. Homotetramer.

The protein resides in the cytoplasm. It carries out the reaction L-citrulline + L-aspartate + ATP = 2-(N(omega)-L-arginino)succinate + AMP + diphosphate + H(+). It functions in the pathway amino-acid biosynthesis; L-arginine biosynthesis; L-arginine from L-ornithine and carbamoyl phosphate: step 2/3. This Geotalea daltonii (strain DSM 22248 / JCM 15807 / FRC-32) (Geobacter daltonii) protein is Argininosuccinate synthase.